The sequence spans 808 residues: Potassium transporter 5 (808 aa).

Residues M1–S65 lie on the Cytoplasmic side of the membrane. Residues L66–Y86 traverse the membrane as a helical segment. The Extracellular segment spans residues E87–G102. Residues V103–V123 form a helical membrane-spanning segment. Over L124–K189 the chain is Cytoplasmic. The helical transmembrane segment at I190–T210 threads the bilayer. The Extracellular portion of the chain corresponds to P211–G221. The chain crosses the membrane as a helical span at residues I222–F242. Residues C243 to K251 lie on the Cytoplasmic side of the membrane. A helical transmembrane segment spans residues V252–L272. At Y273 to G302 the chain is on the extracellular side. The helical transmembrane segment at W303 to L323 threads the bilayer. The Cytoplasmic portion of the chain corresponds to G324–N327. The helical transmembrane segment at V328–A348 threads the bilayer. At G349–V379 the chain is on the extracellular side. Residues V380–I400 form a helical membrane-spanning segment. Residues S401 to Q424 are Cytoplasmic-facing. The chain crosses the membrane as a helical span at residues V425 to F445. At K446 to G456 the chain is on the extracellular side. Residues I457–V477 traverse the membrane as a helical segment. At W478–M482 the chain is on the cytoplasmic side. Residues I483–V503 form a helical membrane-spanning segment. Over L504–G510 the chain is Extracellular. The helical transmembrane segment at G511–I531 threads the bilayer. Over H532–I808 the chain is Cytoplasmic. The tract at residues L699–K722 is disordered.

This sequence belongs to the HAK/KUP transporter (TC 2.A.72.3) family. Expressed in the roots.

Its subcellular location is the cell membrane. The catalysed reaction is K(+)(in) = K(+)(out). In terms of biological role, high-affinity potassium transporter that functions under low potassium conditions. Involved in the positive regulation of salt tolerance under salt stress. This is Potassium transporter 5 from Manihot esculenta (Cassava).